Reading from the N-terminus, the 170-residue chain is Thialysine N-epsilon-acetyltransferase (170 aa).

The 165-residue stretch at 4–168 (VRIREAKEGD…FQGEATRKLA (165 aa)) folds into the N-acetyltransferase domain. A substrate-binding site is contributed by 27 to 28 (FE). At lysine 29 the chain carries N6-acetyllysine. Glutamate 92 contributes to the substrate binding site. Acetyl-CoA-binding positions include 94-96 (IYV), 102-107 (GQGIGS), 133-135 (NQR), and tyrosine 140. Catalysis depends on tyrosine 140, which acts as the Proton donor. Position 152 (glutamate 152) interacts with substrate.

The protein belongs to the acetyltransferase family. In terms of assembly, homodimer. As to expression, widely expressed. Under physiological conditions, SSAT2 is expressed at lower level that SSAT1 (SSAT). Many tissues express only SSAT1, several tissues express both SSAT1 and SSAT2, and bone, cervix, ovary and pineal gland expressed only SSAT2.

The protein resides in the cytoplasm. It catalyses the reaction S-(2-aminoethyl)-L-cysteine + acetyl-CoA = S-(2-acetamidoethyl)-L-cysteine + CoA + H(+). It carries out the reaction an alkane-alpha,omega-diamine + acetyl-CoA = an N-acetylalkane-alpha,omega-diamine + CoA + H(+). Its function is as follows. Catalyzes the N-acetylation of the amino acid thialysine (S-(2-aminoethyl)-L-cysteine), a L-lysine analog with the 4-methylene group substituted with a sulfur. May also catalyze acetylation of polyamines, such as norspermidine, spermidine or spermine. However, ability to acetylate polyamines is weak, suggesting that it does not act as a diamine acetyltransferase in vivo. The sequence is that of Thialysine N-epsilon-acetyltransferase from Homo sapiens (Human).